The chain runs to 504 residues: Lysine--tRNA ligase (504 aa).

The 'HIGH' region signature appears at 23–31 (PSGPIHIGN).

The protein belongs to the class-I aminoacyl-tRNA synthetase family.

The protein localises to the cytoplasm. It catalyses the reaction tRNA(Lys) + L-lysine + ATP = L-lysyl-tRNA(Lys) + AMP + diphosphate. The protein is Lysine--tRNA ligase of Picrophilus torridus (strain ATCC 700027 / DSM 9790 / JCM 10055 / NBRC 100828 / KAW 2/3).